The sequence spans 179 residues: Adenine phosphoribosyltransferase (179 aa).

The protein belongs to the purine/pyrimidine phosphoribosyltransferase family. As to quaternary structure, homodimer.

It is found in the cytoplasm. It catalyses the reaction AMP + diphosphate = 5-phospho-alpha-D-ribose 1-diphosphate + adenine. It functions in the pathway purine metabolism; AMP biosynthesis via salvage pathway; AMP from adenine: step 1/1. In terms of biological role, catalyzes a salvage reaction resulting in the formation of AMP, that is energically less costly than de novo synthesis. In Helicobacter pylori (strain ATCC 700392 / 26695) (Campylobacter pylori), this protein is Adenine phosphoribosyltransferase.